A 317-amino-acid polypeptide reads, in one-letter code: Acetyl-coenzyme A carboxylase carboxyl transferase subunit alpha (317 aa).

Positions 39–293 (RLESKAAAAL…EEAIAEGLAG (255 aa)) constitute a CoA carboxyltransferase C-terminal domain.

The protein belongs to the AccA family. Acetyl-CoA carboxylase is a heterohexamer composed of biotin carboxyl carrier protein (AccB), biotin carboxylase (AccC) and two subunits each of ACCase subunit alpha (AccA) and ACCase subunit beta (AccD).

The protein localises to the cytoplasm. The catalysed reaction is N(6)-carboxybiotinyl-L-lysyl-[protein] + acetyl-CoA = N(6)-biotinyl-L-lysyl-[protein] + malonyl-CoA. It functions in the pathway lipid metabolism; malonyl-CoA biosynthesis; malonyl-CoA from acetyl-CoA: step 1/1. Component of the acetyl coenzyme A carboxylase (ACC) complex. First, biotin carboxylase catalyzes the carboxylation of biotin on its carrier protein (BCCP) and then the CO(2) group is transferred by the carboxyltransferase to acetyl-CoA to form malonyl-CoA. The chain is Acetyl-coenzyme A carboxylase carboxyl transferase subunit alpha from Methylobacterium sp. (strain 4-46).